A 558-amino-acid chain; its full sequence is DNA ligase B (558 aa).

Lysine 124 serves as the catalytic N6-AMP-lysine intermediate.

Belongs to the NAD-dependent DNA ligase family. LigB subfamily.

The catalysed reaction is NAD(+) + (deoxyribonucleotide)n-3'-hydroxyl + 5'-phospho-(deoxyribonucleotide)m = (deoxyribonucleotide)n+m + AMP + beta-nicotinamide D-nucleotide.. Its function is as follows. Catalyzes the formation of phosphodiester linkages between 5'-phosphoryl and 3'-hydroxyl groups in double-stranded DNA using NAD as a coenzyme and as the energy source for the reaction. The sequence is that of DNA ligase B from Klebsiella pneumoniae (strain 342).